The sequence spans 682 residues: Epithelial sodium channel subunit alpha (682 aa).

At 1–111 (MLMRLLPLPS…CSKHNRMKTA (111 aa)) the chain is on the cytoplasmic side. The segment at 34–69 (AQGPLPPQPLQGPLKGDKCEQPGLGPEPTAPQQHTE) is disordered. The chain crosses the membrane as a helical span at residues 112–132 (FWAVLWLCTFGMMYWQFALLF). Over 133–586 (GEYFSYPVSL…SQWSLWFGSS (454 aa)) the chain is Extracellular. 10 disulfide bridges follow: Cys159–Cys329, Cys253–Cys260, Cys306–Cys313, Cys418–Cys503, Cys440–Cys480, Cys440–Cys499, Cys444–Cys495, Cys453–Cys480, Cys453–Cys503, and Cys455–Cys469. A glycan (N-linked (GlcNAc...) asparagine) is linked at Asn191. Residues 201 to 267 (RSRRSLADTL…SDCFYQTSSS (67 aa)) form a gating release of inhibition by proteolysis (GRIP); protease-sensitive region that is responsible for the proteolytic activation of the channel region. The interval 221-240 (PEPRRARSSDPSSVRDNNPR) is disordered. An N-linked (GlcNAc...) asparagine glycan is attached at Asn504. Residues 587 to 607 (VLSVVEMAEFMFDLLVITLLM) traverse the membrane as a helical segment. At 608–682 (LLRRFRSRYW…SSAACAPREP (75 aa)) the chain is on the cytoplasmic side. The PY motif; recruits WW domain-containing proteins and is thereby required for ubiquitination and inhibition of the channel by NEDD4 and NEDD4L motif lies at 653–657 (PPPAY).

This sequence belongs to the amiloride-sensitive sodium channel (TC 1.A.6) family. SCNN1A subfamily. Heterotrimer; containing an alpha/SCNN1A, a beta/SCNN1B and a gamma/SCNN1G subunit. Interacts with WWP1 (via WW domains). Interacts with WWP2 (via WW domains); inhibits the channel. Interacts with BPIFA1; the interaction is indirect via SCNN1B and inhibits the proteolytic processing of SCNN1A and SCNN1G and the activation of ENaC. Interacts with the full-length immature form of PCSK9 (pro-PCSK9). In terms of processing, ubiquitinated. Can be ubiquitinated at multiple sites and undergo monoubiquitination and polyubiquitination. Ubiquitination by NEDD4 or NEDD4L inhibits the ENaC channel through endocytosis, intracellular retention and degradation of its individual subunits. Post-translationally, N-glycosylated. ENaC is activated through the proteolytic maturation of its subunits. Furin cleaves the SCNN1A subunit, which results in a stepwise increase in the open probability of the channel due to the release of an inhibitory tract. BPIFA1, which is recruited by the SCNN1B subunit, prevents the proteolytic activation of ENaC.

The protein resides in the apical cell membrane. It localises to the cell projection. The protein localises to the cilium. It is found in the cytoplasmic granule. Its subcellular location is the cytoplasm. The protein resides in the cytoplasmic vesicle. It localises to the secretory vesicle. The protein localises to the acrosome. It is found in the flagellum. The catalysed reaction is Na(+)(in) = Na(+)(out). With respect to regulation, originally identified and characterized by its inhibition by the diuretic drug amiloride. Functionally, this is one of the three pore-forming subunits of the heterotrimeric epithelial sodium channel (ENaC), a critical regulator of sodium balance and fluid homeostasis. ENaC operates in epithelial tissues, where it mediates the electrodiffusion of sodium ions from extracellular fluid through the apical membrane of cells, with water following osmotically. It plays a key role in maintaining sodium homeostasis through electrogenic sodium reabsorption in the kidneys. Additionally, ENaC is essential for airway surface liquid homeostasis, which is crucial for proper mucus clearance. The protein is Epithelial sodium channel subunit alpha of Cavia porcellus (Guinea pig).